Reading from the N-terminus, the 390-residue chain is Pepsin B (390 aa).

The first 16 residues, 1-16, serve as a signal peptide directing secretion; sequence MKIQVLVLVCLHLSEG. Residues 17 to 59 constitute a propeptide, activation peptide; it reads VERIILKKGKSIRQVMEERGVLETFLRNHPKVDPAAKYLFNND. The Peptidase A1 domain maps to 74–387; that stretch reads YFGEISIGTP…DMAANRVGFA (314 aa). Aspartate 92 is an active-site residue. Disulfide bonds link cysteine 105–cysteine 110 and cysteine 269–cysteine 273. Residue aspartate 278 is part of the active site. Cysteine 312 and cysteine 345 are disulfide-bonded.

The protein belongs to the peptidase A1 family.

It is found in the secreted. The enzyme catalyses Degradation of gelatin, little activity on hemoglobin. Specificity on B chain of insulin more restricted than that of pepsin A. Does not cleave 1-Phe-|-Val-2, 4-Gln-|-His-5 or 23-Gly-|-Phe-24.. In terms of biological role, hydrolyzes various peptides including beta-endorphin, insulin B chain, dynorphin A, and neurokinin A, with high specificity for the cleavage of the Phe-Xaa bonds. This Canis lupus familiaris (Dog) protein is Pepsin B (PGB).